The following is a 1247-amino-acid chain: DNA-directed RNA polymerase subunit beta (1247 aa).

It belongs to the RNA polymerase beta chain family. As to quaternary structure, in plastids the minimal PEP RNA polymerase catalytic core is composed of four subunits: alpha, beta, beta', and beta''. When a (nuclear-encoded) sigma factor is associated with the core the holoenzyme is formed, which can initiate transcription.

It localises to the plastid. It carries out the reaction RNA(n) + a ribonucleoside 5'-triphosphate = RNA(n+1) + diphosphate. Functionally, DNA-dependent RNA polymerase catalyzes the transcription of DNA into RNA using the four ribonucleoside triphosphates as substrates. The chain is DNA-directed RNA polymerase subunit beta (rpoB) from Helicosporidium sp. subsp. Simulium jonesii (Green alga).